A 280-amino-acid chain; its full sequence is 2-dehydro-3-deoxyphosphooctonate aldolase (280 aa).

The protein belongs to the KdsA family.

The protein localises to the cytoplasm. The catalysed reaction is D-arabinose 5-phosphate + phosphoenolpyruvate + H2O = 3-deoxy-alpha-D-manno-2-octulosonate-8-phosphate + phosphate. It participates in carbohydrate biosynthesis; 3-deoxy-D-manno-octulosonate biosynthesis; 3-deoxy-D-manno-octulosonate from D-ribulose 5-phosphate: step 2/3. Its pathway is bacterial outer membrane biogenesis; lipopolysaccharide biosynthesis. The protein is 2-dehydro-3-deoxyphosphooctonate aldolase of Thioalkalivibrio sulfidiphilus (strain HL-EbGR7).